The sequence spans 102 residues: Large ribosomal subunit protein bL21 (102 aa).

It belongs to the bacterial ribosomal protein bL21 family. As to quaternary structure, part of the 50S ribosomal subunit. Contacts protein L20.

In terms of biological role, this protein binds to 23S rRNA in the presence of protein L20. The protein is Large ribosomal subunit protein bL21 of Staphylococcus aureus.